The primary structure comprises 295 residues: Elongation factor Ts (295 aa).

Positions 79-82 (TDFV) are involved in Mg(2+) ion dislocation from EF-Tu.

The protein belongs to the EF-Ts family.

The protein localises to the cytoplasm. Functionally, associates with the EF-Tu.GDP complex and induces the exchange of GDP to GTP. It remains bound to the aminoacyl-tRNA.EF-Tu.GTP complex up to the GTP hydrolysis stage on the ribosome. This is Elongation factor Ts from Bacillus cereus (strain ATCC 10987 / NRS 248).